A 193-amino-acid chain; its full sequence is Ion-translocating oxidoreductase complex subunit A (193 aa).

6 helical membrane passes run 5–25, 39–59, 62–82, 102–122, 134–154, and 171–191; these read LLLL…FLGL, MGMG…AWAV, FILV…LVIA, LLGI…VALL, AVYG…FAAI, and SIAL…SGLV.

This sequence belongs to the NqrDE/RnfAE family. As to quaternary structure, the complex is composed of six subunits: RnfA, RnfB, RnfC, RnfD, RnfE and RnfG.

Its subcellular location is the cell inner membrane. Functionally, part of a membrane-bound complex that couples electron transfer with translocation of ions across the membrane. In Edwardsiella ictaluri (strain 93-146), this protein is Ion-translocating oxidoreductase complex subunit A.